Consider the following 101-residue polypeptide: MTTNSLVLSGTITRSRRFKSPAGIAHSVIMLEHKSQRYEADMLRNVYVQIQVILSGPRFESVADNLKAGVEVQVQGFMTLQQGRNGQNRLVIHAENVELKT.

Positions 1-101 (MTTNSLVLSG…IHAENVELKT (101 aa)) constitute an SSB domain.

The protein belongs to the PriB family. Homodimer. Interacts with PriA and DnaT. Component of the replication restart primosome. Primosome assembly occurs via a 'hand-off' mechanism. PriA binds to replication forks, subsequently PriB then DnaT bind; DnaT then displaces ssDNA to generate the helicase loading substrate.

Its function is as follows. Involved in the restart of stalled replication forks, which reloads the replicative helicase on sites other than the origin of replication; the PriA-PriB pathway is the major replication restart pathway. During primosome assembly it facilitates complex formation between PriA and DnaT on DNA; stabilizes PriA on DNA. Stimulates the DNA unwinding activity of PriA helicase. This chain is Replication restart protein PriB, found in Shewanella putrefaciens (strain CN-32 / ATCC BAA-453).